Here is a 270-residue protein sequence, read N- to C-terminus: DNA packaging protein OPG160 (270 aa).

55–62 (VYNPDYDG) serves as a coordination point for ATP.

This sequence belongs to the orthopoxvirus OPG160 protein family. Interacts with protein OPG137.

In terms of biological role, participates in viral DNA packaging and virion morphogenesis. The chain is DNA packaging protein OPG160 (OPG160) from Homo sapiens (Human).